The primary structure comprises 329 residues: DNA-directed RNA polymerase subunit alpha (329 aa).

Residues 1 to 234 (MQGSVTEFLR…EQLDAFVELR (234 aa)) form an alpha N-terminal domain (alpha-NTD) region. The segment at 248 to 329 (FDPILLRPVD…WPPASLVDDL (82 aa)) is alpha C-terminal domain (alpha-CTD).

The protein belongs to the RNA polymerase alpha chain family. In terms of assembly, homodimer. The RNAP catalytic core consists of 2 alpha, 1 beta, 1 beta' and 1 omega subunit. When a sigma factor is associated with the core the holoenzyme is formed, which can initiate transcription.

It carries out the reaction RNA(n) + a ribonucleoside 5'-triphosphate = RNA(n+1) + diphosphate. In terms of biological role, DNA-dependent RNA polymerase catalyzes the transcription of DNA into RNA using the four ribonucleoside triphosphates as substrates. This is DNA-directed RNA polymerase subunit alpha from Shewanella violacea (strain JCM 10179 / CIP 106290 / LMG 19151 / DSS12).